The chain runs to 150 residues: UPF0178 protein PputGB1_5282 (150 aa).

The protein belongs to the UPF0178 family.

This is UPF0178 protein PputGB1_5282 from Pseudomonas putida (strain GB-1).